The sequence spans 1376 residues: DNA-directed RNA polymerase subunit beta (1376 aa).

Polar residues predominate over residues 1357–1368; sequence NSKTGRQTNPGT. Positions 1357–1376 are disordered; it reads NSKTGRQTNPGTRENLPAAE.

The protein belongs to the RNA polymerase beta chain family. As to quaternary structure, the RNAP catalytic core consists of 2 alpha, 1 beta, 1 beta' and 1 omega subunit. When a sigma factor is associated with the core the holoenzyme is formed, which can initiate transcription.

It catalyses the reaction RNA(n) + a ribonucleoside 5'-triphosphate = RNA(n+1) + diphosphate. In terms of biological role, DNA-dependent RNA polymerase catalyzes the transcription of DNA into RNA using the four ribonucleoside triphosphates as substrates. The sequence is that of DNA-directed RNA polymerase subunit beta from Azorhizobium caulinodans (strain ATCC 43989 / DSM 5975 / JCM 20966 / LMG 6465 / NBRC 14845 / NCIMB 13405 / ORS 571).